The following is a 188-amino-acid chain: ATP synthase subunit b (188 aa).

The helical transmembrane segment at 7-26 (TAAAGAMTLFFASMAYASGD) threads the bilayer.

The protein belongs to the ATPase B chain family. As to quaternary structure, F-type ATPases have 2 components, F(1) - the catalytic core - and F(0) - the membrane proton channel. F(1) has five subunits: alpha(3), beta(3), gamma(1), delta(1), epsilon(1). F(0) has three main subunits: a(1), b(2) and c(10-14). The alpha and beta chains form an alternating ring which encloses part of the gamma chain. F(1) is attached to F(0) by a central stalk formed by the gamma and epsilon chains, while a peripheral stalk is formed by the delta and b chains.

It is found in the cell inner membrane. Its function is as follows. F(1)F(0) ATP synthase produces ATP from ADP in the presence of a proton or sodium gradient. F-type ATPases consist of two structural domains, F(1) containing the extramembraneous catalytic core and F(0) containing the membrane proton channel, linked together by a central stalk and a peripheral stalk. During catalysis, ATP synthesis in the catalytic domain of F(1) is coupled via a rotary mechanism of the central stalk subunits to proton translocation. Functionally, component of the F(0) channel, it forms part of the peripheral stalk, linking F(1) to F(0). This chain is ATP synthase subunit b, found in Nitratidesulfovibrio vulgaris (strain DP4) (Desulfovibrio vulgaris).